The chain runs to 239 residues: 7-cyano-7-deazaguanine synthase (239 aa).

12–22 serves as a coordination point for ATP; it reads FSGGQDSATCL. Residues cysteine 200, cysteine 215, cysteine 218, and cysteine 221 each coordinate Zn(2+).

This sequence belongs to the QueC family. It depends on Zn(2+) as a cofactor.

The enzyme catalyses 7-carboxy-7-deazaguanine + NH4(+) + ATP = 7-cyano-7-deazaguanine + ADP + phosphate + H2O + H(+). The protein operates within purine metabolism; 7-cyano-7-deazaguanine biosynthesis. Functionally, catalyzes the ATP-dependent conversion of 7-carboxy-7-deazaguanine (CDG) to 7-cyano-7-deazaguanine (preQ(0)). The sequence is that of 7-cyano-7-deazaguanine synthase from Hyphomonas neptunium (strain ATCC 15444).